Consider the following 172-residue polypeptide: Small ribosomal subunit protein uS5 (172 aa).

Residues 16–79 (LKDRLVAINR…ESAKKNLVKV (64 aa)) form the S5 DRBM domain.

The protein belongs to the universal ribosomal protein uS5 family. Part of the 30S ribosomal subunit. Contacts proteins S4 and S8.

Functionally, with S4 and S12 plays an important role in translational accuracy. Located at the back of the 30S subunit body where it stabilizes the conformation of the head with respect to the body. The sequence is that of Small ribosomal subunit protein uS5 from Bacteroides thetaiotaomicron (strain ATCC 29148 / DSM 2079 / JCM 5827 / CCUG 10774 / NCTC 10582 / VPI-5482 / E50).